Consider the following 81-residue polypeptide: RNA-binding protein Hfq (81 aa).

Residues 10-69 form the Sm domain; that stretch reads DPFLNTLRREHVPVSIYLVNGIKLQGQIESFDQYVVLLRNTVTQMVYKHAISTIVPGRAV.

It belongs to the Hfq family. As to quaternary structure, homohexamer.

Its function is as follows. RNA chaperone that binds small regulatory RNA (sRNAs) and mRNAs to facilitate mRNA translational regulation in response to envelope stress, environmental stress and changes in metabolite concentrations. Also binds with high specificity to tRNAs. The chain is RNA-binding protein Hfq from Variovorax paradoxus (strain S110).